The sequence spans 216 residues: Protein Syd (216 aa).

This sequence belongs to the Syd family.

It localises to the cell inner membrane. Its function is as follows. Interacts with the SecY protein in vivo. May bind preferentially to an uncomplexed state of SecY, thus functioning either as a chelating agent for excess SecY in the cell or as a regulatory factor that negatively controls the translocase function. The polypeptide is Protein Syd (Shewanella putrefaciens (strain CN-32 / ATCC BAA-453)).